Reading from the N-terminus, the 361-residue chain is Peptide chain release factor 1 (361 aa).

Residue Gln237 is modified to N5-methylglutamine. The span at 283 to 296 (VEDEKRRSEEESTR) shows a compositional bias: basic and acidic residues. The tract at residues 283–305 (VEDEKRRSEEESTRRNLVSSGDR) is disordered.

It belongs to the prokaryotic/mitochondrial release factor family. Methylated by PrmC. Methylation increases the termination efficiency of RF1.

It localises to the cytoplasm. Functionally, peptide chain release factor 1 directs the termination of translation in response to the peptide chain termination codons UAG and UAA. The sequence is that of Peptide chain release factor 1 from Shewanella woodyi (strain ATCC 51908 / MS32).